We begin with the raw amino-acid sequence, 213 residues long: Adenylate kinase (213 aa).

10-15 contributes to the ATP binding site; sequence GAGKGT. The tract at residues 30–59 is NMP; it reads STGNLLRDEVKSKTDLGVDIEKLISNGKFV. AMP-binding positions include Thr-31, Arg-36, 57-59, 85-88, and Gln-92; these read KFV and GYPR. The LID stretch occupies residues 126–162; sequence GRMTCEKCNMTLNEYFNKEQIELHPCGVEHLKKRKDD. Residue Arg-127 coordinates ATP. AMP is bound by residues Arg-159 and Arg-170. Gly-198 is an ATP binding site.

Belongs to the adenylate kinase family. In terms of assembly, monomer.

Its subcellular location is the cytoplasm. The enzyme catalyses AMP + ATP = 2 ADP. The protein operates within purine metabolism; AMP biosynthesis via salvage pathway; AMP from ADP: step 1/1. Its function is as follows. Catalyzes the reversible transfer of the terminal phosphate group between ATP and AMP. Plays an important role in cellular energy homeostasis and in adenine nucleotide metabolism. The protein is Adenylate kinase of Pelagibacter ubique (strain HTCC1062).